Reading from the N-terminus, the 316-residue chain is Tetrahydromethanopterin S-methyltransferase subunit H (316 aa).

It belongs to the MtrH family. The complex is composed of 8 subunits; MtrA, MtrB, MtrC, MtrD, MtrE, MtrF, MtrG and MtrH.

It carries out the reaction 5-methyl-5,6,7,8-tetrahydromethanopterin + coenzyme M + 2 Na(+)(in) = 5,6,7,8-tetrahydromethanopterin + methyl-coenzyme M + 2 Na(+)(out). The protein operates within one-carbon metabolism; methanogenesis from CO(2); methyl-coenzyme M from 5,10-methylene-5,6,7,8-tetrahydromethanopterin: step 2/2. Part of a complex that catalyzes the formation of methyl-coenzyme M and tetrahydromethanopterin from coenzyme M and methyl-tetrahydromethanopterin. This is an energy-conserving, sodium-ion translocating step. MtrH catalyzes the transfer of the methyl group from methyl-tetrahydromethanopterin to the corrinoid prosthetic group of MtrA. The protein is Tetrahydromethanopterin S-methyltransferase subunit H of Methanosarcina barkeri (strain Fusaro / DSM 804).